We begin with the raw amino-acid sequence, 187 residues long: Elongation factor P (187 aa).

This sequence belongs to the elongation factor P family.

Its subcellular location is the cytoplasm. The protein operates within protein biosynthesis; polypeptide chain elongation. In terms of biological role, involved in peptide bond synthesis. Stimulates efficient translation and peptide-bond synthesis on native or reconstituted 70S ribosomes in vitro. Probably functions indirectly by altering the affinity of the ribosome for aminoacyl-tRNA, thus increasing their reactivity as acceptors for peptidyl transferase. This is Elongation factor P from Desulfotalea psychrophila (strain LSv54 / DSM 12343).